The sequence spans 382 residues: 8-amino-7-oxononanoate synthase (382 aa).

Residue Arg26 coordinates substrate. 104-105 is a binding site for pyridoxal 5'-phosphate; sequence GY. His129 contributes to the substrate binding site. Residues Ser175, 200–203, and 232–235 contribute to the pyridoxal 5'-phosphate site; these read DEAH and TLSK. Lys235 is subject to N6-(pyridoxal phosphate)lysine. Thr345 is a substrate binding site.

It belongs to the class-II pyridoxal-phosphate-dependent aminotransferase family. BioF subfamily. In terms of assembly, homodimer. Pyridoxal 5'-phosphate serves as cofactor.

It carries out the reaction 6-carboxyhexanoyl-[ACP] + L-alanine + H(+) = (8S)-8-amino-7-oxononanoate + holo-[ACP] + CO2. The protein operates within cofactor biosynthesis; biotin biosynthesis. Its function is as follows. Catalyzes the decarboxylative condensation of pimeloyl-[acyl-carrier protein] and L-alanine to produce 8-amino-7-oxononanoate (AON), [acyl-carrier protein], and carbon dioxide. The protein is 8-amino-7-oxononanoate synthase of Mycobacterium sp. (strain KMS).